Reading from the N-terminus, the 468-residue chain is Factor XIIa inhibitor (468 aa).

The first 23 residues, 1–23 (MASRLTPLTLLLLLLLAGDRVTS), serve as a signal peptide directing secretion. Positions 27–60 (VGPGNLQEGESEGDSQKGGILDGESIQGNEDSPT) are disordered. N-linked (GlcNAc...) asparagine glycans are attached at residues asparagine 65, asparagine 176, asparagine 227, and asparagine 326. Cystine bridges form between cysteine 97–cysteine 396 and cysteine 104–cysteine 179.

Belongs to the serpin family. In terms of processing, N- and O-glycosylated.

The protein resides in the secreted. In terms of biological role, may play a potentially crucial role in regulating important physiological pathways including complement activation, blood coagulation, fibrinolysis and the generation of kinins. The protein is Factor XIIa inhibitor of Bos taurus (Bovine).